A 505-amino-acid chain; its full sequence is Deoxyguanosinetriphosphate triphosphohydrolase (505 aa).

The HD domain maps to 66 to 273; sequence RLTHSLEVQQ…MEAADDISYC (208 aa).

Belongs to the dGTPase family. Type 1 subfamily. In terms of assembly, homotetramer. It depends on Mg(2+) as a cofactor.

The enzyme catalyses dGTP + H2O = 2'-deoxyguanosine + triphosphate + H(+). DGTPase preferentially hydrolyzes dGTP over the other canonical NTPs. The sequence is that of Deoxyguanosinetriphosphate triphosphohydrolase from Yersinia enterocolitica serotype O:8 / biotype 1B (strain NCTC 13174 / 8081).